A 492-amino-acid chain; its full sequence is Protein adenylyltransferase Fic (492 aa).

A compositionally biased stretch (low complexity) spans 1-17; sequence MCTEAEQPSPPAQQQEQ. The segment at 1-25 is disordered; sequence MCTEAEQPSPPAQQQEQGNPPLCKA. Residues 33–55 form a helical membrane-spanning segment; the sequence is LYRLVLLFVAGSLAAWTFHALSS. TPR repeat units follow at residues 118-151 and 152-186; these read ALGALRMAQDLYLAGKDDKAARLFEHALALAPRH and PEVLLRYGEFLEHNQRNIVLADQYYFQALTISPSN. Residues 243–248 carry the Inhibitory (S/T)XXXE(G/N) motif motif; sequence SVGIEG. ATP contacts are provided by residues E247 and 328-331; that span reads VGGH. Positions 297–432 constitute a Fido domain; it reads ITIKDILELH…IRPFVRFIAD (136 aa). The active site involves H375. ATP is bound by residues 379–386, 411–412, and N419; these read DGNGRTSR and YY.

Belongs to the fic family. In terms of assembly, homodimer.

The protein localises to the membrane. The enzyme catalyses L-tyrosyl-[protein] + ATP = O-(5'-adenylyl)-L-tyrosyl-[protein] + diphosphate. It carries out the reaction L-threonyl-[protein] + ATP = 3-O-(5'-adenylyl)-L-threonyl-[protein] + diphosphate. The catalysed reaction is 3-O-(5'-adenylyl)-L-threonyl-[protein] + H2O = L-threonyl-[protein] + AMP + H(+). Its activity is regulated as follows. The side chain of Glu-247 determines which of the two opposing activities (AMPylase or de-AMPylase) will take place. In response to endoplasmic reticulum stress, mediates de-AMPylase activity. Adenylyltransferase activity is inhibited by the inhibitory helix present at the N-terminus: Glu-247 binds ATP and competes with ATP-binding at Arg-386, thereby preventing adenylyltransferase activity. In unstressed cells, disengagement of Glu-247 promotes adenylyltransferase activity. Activation dissociates ATP-binding from Glu-247, allowing ordered binding of the entire ATP moiety with the alpha-phosphate in an orientation that is productive for accepting an incoming target hydroxyl side chain. Protein that can both mediate the addition of adenosine 5'-monophosphate (AMP) to specific residues of target proteins (AMPylation), and the removal of the same modification from target proteins (de-AMPylation), depending on the context. The side chain of Glu-247 determines which of the two opposing activities (AMPylase or de-AMPylase) will take place. Acts as a key regulator of the unfolded protein response (UPR) by mediating AMPylation or de-AMPylation of Hsc70-3/BiP. In unstressed cells, acts as an adenylyltransferase by mediating AMPylation of Hsc70-3/BiP at 'Thr-518', thereby inactivating it. In response to endoplasmic reticulum stress, acts as a phosphodiesterase by mediating removal of ATP (de-AMPylation) from Hsc70-3/BiP at 'Thr-518', leading to restore HSPA5/BiP activity. The chain is Protein adenylyltransferase Fic from Drosophila sechellia (Fruit fly).